Here is a 363-residue protein sequence, read N- to C-terminus: Cyanuric acid amidohydrolase (363 aa).

Residues 1–103 (MKTRVTRLTV…LVFEVDDSAP (103 aa)) are RU A. Substrate-binding positions include arginine 51 and 82-83 (SG). The RU B stretch occupies residues 111–247 (GLAAGVAFTR…NEVLVLGNAP (137 aa)). Lysine 161 is a catalytic residue. Substrate-binding positions include arginine 193 and 230 to 231 (SA). Serine 230 acts as the Nucleophile in catalysis. Positions 253–363 (YRIGHAVMED…GGPLALIVRS (111 aa)) are RU C. Mg(2+) is bound at residue glutamate 297. Substrate contacts are provided by residues arginine 324 and 343 to 344 (SG). Mg(2+) is bound by residues alanine 346, glutamine 349, glycine 350, proline 351, and glycine 354.

This sequence belongs to the cyclic amide hydrolase (CyAH) family. In terms of assembly, homotetramer.

The enzyme catalyses cyanurate + H2O = 1-carboxybiuret + H(+). It functions in the pathway xenobiotic degradation; atrazine degradation; biuret from cyanurate: step 1/1. Inhibited by barbituric acid. Functionally, responsible for the hydrolysis of cyanuric acid, an intermediate formed during catabolism of s-triazine based compounds in herbicides such as atrazine and polymers such as melamine. Catalyzes the hydrolytic opening of the s-triazine ring of cyanuric acid (2,4,6-trihydroxy-s-triazine) to yield carbon dioxide and carboxybiuret, which spontaneously decarboxylates to biuret. This chain is Cyanuric acid amidohydrolase, found in Ectopseudomonas oleovorans (strain CECT 5344) (Pseudomonas pseudoalcaligenes).